A 386-amino-acid polypeptide reads, in one-letter code: Glucose-1-phosphate adenylyltransferase (386 aa).

Alpha-D-glucose 1-phosphate-binding positions include Tyr99, Gly164, 179-180 (EK), and Ser190.

It belongs to the bacterial/plant glucose-1-phosphate adenylyltransferase family. As to quaternary structure, homotetramer.

The catalysed reaction is alpha-D-glucose 1-phosphate + ATP + H(+) = ADP-alpha-D-glucose + diphosphate. It functions in the pathway glycan biosynthesis; glycogen biosynthesis. In terms of biological role, involved in the biosynthesis of ADP-glucose, a building block required for the elongation reactions to produce glycogen. Catalyzes the reaction between ATP and alpha-D-glucose 1-phosphate (G1P) to produce pyrophosphate and ADP-Glc. This chain is Glucose-1-phosphate adenylyltransferase, found in Clostridioides difficile (strain 630) (Peptoclostridium difficile).